Here is a 184-residue protein sequence, read N- to C-terminus: Large ribosomal subunit protein uL18 (184 aa).

The protein belongs to the universal ribosomal protein uL18 family. As to quaternary structure, part of the 50S ribosomal subunit. Contacts the 5S and 23S rRNAs.

In terms of biological role, this is one of the proteins that bind and probably mediate the attachment of the 5S RNA into the large ribosomal subunit, where it forms part of the central protuberance. This chain is Large ribosomal subunit protein uL18, found in Haloferax mediterranei (strain ATCC 33500 / DSM 1411 / JCM 8866 / NBRC 14739 / NCIMB 2177 / R-4) (Halobacterium mediterranei).